Reading from the N-terminus, the 285-residue chain is Acetyl-coenzyme A carboxylase carboxyl transferase subunit beta (285 aa).

One can recognise a CoA carboxyltransferase N-terminal domain in the interval 22–285 (LWTKCEACGA…HPGVAYAPGV (264 aa)). 4 residues coordinate Zn(2+): C26, C29, C45, and C48. The segment at 26 to 48 (CEACGAQIYKKEFQENLHVCPKC) adopts a C4-type zinc-finger fold.

This sequence belongs to the AccD/PCCB family. In terms of assembly, acetyl-CoA carboxylase is a heterohexamer composed of biotin carboxyl carrier protein (AccB), biotin carboxylase (AccC) and two subunits each of ACCase subunit alpha (AccA) and ACCase subunit beta (AccD). Zn(2+) is required as a cofactor.

It is found in the cytoplasm. The catalysed reaction is N(6)-carboxybiotinyl-L-lysyl-[protein] + acetyl-CoA = N(6)-biotinyl-L-lysyl-[protein] + malonyl-CoA. It participates in lipid metabolism; malonyl-CoA biosynthesis; malonyl-CoA from acetyl-CoA: step 1/1. Component of the acetyl coenzyme A carboxylase (ACC) complex. Biotin carboxylase (BC) catalyzes the carboxylation of biotin on its carrier protein (BCCP) and then the CO(2) group is transferred by the transcarboxylase to acetyl-CoA to form malonyl-CoA. The chain is Acetyl-coenzyme A carboxylase carboxyl transferase subunit beta from Thermus thermophilus (strain ATCC BAA-163 / DSM 7039 / HB27).